A 207-amino-acid chain; its full sequence is Glycerol-3-phosphate acyltransferase (207 aa).

A run of 5 helical transmembrane segments spans residues 4-24 (VVATVVFAVAAYLIGSVSFAV), 58-78 (ILTLLGDAAKGWLAVWLAQLL), 86-106 (DMGIALVVIAAFLGHLYPVFH), 120-140 (ILLALSGWLGLATLATWLIIA), and 162-182 (VLLFGIDPLAGAIAVMSVLLI).

This sequence belongs to the PlsY family. As to quaternary structure, probably interacts with PlsX.

It is found in the cell inner membrane. The enzyme catalyses an acyl phosphate + sn-glycerol 3-phosphate = a 1-acyl-sn-glycero-3-phosphate + phosphate. It participates in lipid metabolism; phospholipid metabolism. Its function is as follows. Catalyzes the transfer of an acyl group from acyl-phosphate (acyl-PO(4)) to glycerol-3-phosphate (G3P) to form lysophosphatidic acid (LPA). This enzyme utilizes acyl-phosphate as fatty acyl donor, but not acyl-CoA or acyl-ACP. The sequence is that of Glycerol-3-phosphate acyltransferase from Ralstonia nicotianae (strain ATCC BAA-1114 / GMI1000) (Ralstonia solanacearum).